We begin with the raw amino-acid sequence, 270 residues long: Probable thioesterase BOA10 (270 aa).

This sequence belongs to the AMT4 thioesterase family.

It participates in polyketide biosynthesis. In terms of biological role, probable thioesterase; part of the gene cluster B that mediates the biosynthesis of botcinic acid and its botcinin derivatives, acetate-derived polyketides that contribute to virulence when combined with the sesquiterpene botrydial. Botcinic acid and its derivatives have been shown to induce chlorosis and necrosis during host plant infection, but also have antifungal activities. Two polyketide synthases, BOA6 and BOA9, are involved in the biosynthesis of botcinins. BOA6 mediates the formation of the per-methylated tetraketide core by condensation of four units of malonyl-CoA with one unit of acetyl-CoA, which would be methylated in activated methylene groups to yield a bicyclic acid intermediate that could then either be converted to botrylactone derivatives or lose the starter acetate unit through a retro-Claisen type C-C bond cleavage to yield botcinin derivatives. The second polyketide synthase, BOA9, is probably required for the biosynthesis of the tetraketide side chain of botcinins. The methyltransferase (MT) domain within BOA6 is probably responsible for the incorporation of four methyl groups. The trans-enoyl reductase BOA5 might take over the enoyl reductase function of BOA6 that misses an ER domain. The monooxygenases BOA2, BOA3 and BOA4 might be involved in further hydroxylations at C4, C5 and C8, whereas BOA7, close to BOA9, could potentially be involved in the hydroxylation at C4 in the side chain of botcinins. The protein is Probable thioesterase BOA10 of Botryotinia fuckeliana (strain B05.10) (Noble rot fungus).